A 359-amino-acid chain; its full sequence is Outer membrane protein assembly factor BamC (359 aa).

A signal peptide spans 1-34 (MASLFDKNSFQMTRLQKTAVAKVVGVSLIMLLAA). A lipid anchor (N-palmitoyl cysteine) is attached at C35. C35 is lipidated: S-diacylglycerol cysteine.

The protein belongs to the BamC family. In terms of assembly, part of the Bam complex, which is composed of the outer membrane protein BamA, and four lipoproteins BamB, BamC, BamD and BamE.

The protein localises to the cell outer membrane. Its function is as follows. Part of the outer membrane protein assembly complex, which is involved in assembly and insertion of beta-barrel proteins into the outer membrane. The chain is Outer membrane protein assembly factor BamC from Rahnella sp. (strain Y9602).